The following is a 271-amino-acid chain: uncharacterized protein (271 aa).

Residues 1-18 (MKGFFLIAGFLLFARALC) form the signal peptide. The Lumenal segment spans residues 19 to 187 (ASWNVEEGTL…FSPPPKRANY (169 aa)). A helical transmembrane segment spans residues 188-208 (FLSICFSVSVVVSLIGLLGVW). At 209–230 (QKLLPKSNVYSVSSSSFARTFG) the chain is on the cytoplasmic side. The helical transmembrane segment at 231 to 251 (FASLAVAEILLFIYWTSLSIF) threads the bilayer. The Lumenal portion of the chain corresponds to 252 to 271 (QFGAYAAGVAIMCGIAAKSL).

Its subcellular location is the endoplasmic reticulum membrane. This is an uncharacterized protein from Schizosaccharomyces pombe (strain 972 / ATCC 24843) (Fission yeast).